The sequence spans 183 residues: uncharacterized protein (183 aa).

The protein belongs to the asfivirus S183L family.

This is an uncharacterized protein from Ornithodoros (relapsing fever ticks).